The sequence spans 210 residues: CASP-like protein 3A2 (210 aa).

The Cytoplasmic segment spans residues 1–45 (MMMNGQKMAAAEVAVQLPESKMVTENIGGAAAAMRPFGRKAEVMN). The helical transmembrane segment at 46-66 (VLLRVLCMVTSVAALSSMVTA) threads the bilayer. The Extracellular segment spans residues 67-92 (QQSSTVSIYGFMLPIQSKWSFSHSFE). The chain crosses the membrane as a helical span at residues 93–113 (YVVGVSAVVAAHSLLQLLISV). Residues 114–128 (SRLLRKSPVIQSRSH) are Cytoplasmic-facing. The chain crosses the membrane as a helical span at residues 129-149 (AWLVFAGDQVFAYAMISAGAA). The Extracellular portion of the chain corresponds to 150 to 178 (ASGVTNLNRTGIRHTALPNFCKPLQSFCD). A glycan (N-linked (GlcNAc...) asparagine) is linked at N157. Residues 179–199 (HVAVSIFFTFLSCFLLAASAV) form a helical membrane-spanning segment. Topologically, residues 200-210 (QEVIWLSRSKY) are cytoplasmic.

Belongs to the Casparian strip membrane proteins (CASP) family. Homodimer and heterodimers.

The protein localises to the cell membrane. The sequence is that of CASP-like protein 3A2 from Populus trichocarpa (Western balsam poplar).